The chain runs to 244 residues: Ribonuclease PH (244 aa).

Phosphate contacts are provided by residues Arg-86 and 124 to 126; that span reads GTR.

The protein belongs to the RNase PH family. As to quaternary structure, homohexameric ring arranged as a trimer of dimers.

It catalyses the reaction tRNA(n+1) + phosphate = tRNA(n) + a ribonucleoside 5'-diphosphate. Phosphorolytic 3'-5' exoribonuclease that plays an important role in tRNA 3'-end maturation. Removes nucleotide residues following the 3'-CCA terminus of tRNAs; can also add nucleotides to the ends of RNA molecules by using nucleoside diphosphates as substrates, but this may not be physiologically important. Probably plays a role in initiation of 16S rRNA degradation (leading to ribosome degradation) during starvation. This chain is Ribonuclease PH, found in Oceanobacillus iheyensis (strain DSM 14371 / CIP 107618 / JCM 11309 / KCTC 3954 / HTE831).